A 281-amino-acid chain; its full sequence is NADPH-dependent 7-cyano-7-deazaguanine reductase (281 aa).

88–90 (IES) serves as a coordination point for substrate. 90–91 (SK) serves as a coordination point for NADPH. Cys-189 acts as the Thioimide intermediate in catalysis. The active-site Proton donor is the Asp-196. Residue 228 to 229 (HE) participates in substrate binding. Residue 257–258 (RG) coordinates NADPH.

It belongs to the GTP cyclohydrolase I family. QueF type 2 subfamily. Homodimer.

It localises to the cytoplasm. The catalysed reaction is 7-aminomethyl-7-carbaguanine + 2 NADP(+) = 7-cyano-7-deazaguanine + 2 NADPH + 3 H(+). Its pathway is tRNA modification; tRNA-queuosine biosynthesis. In terms of biological role, catalyzes the NADPH-dependent reduction of 7-cyano-7-deazaguanine (preQ0) to 7-aminomethyl-7-deazaguanine (preQ1). The sequence is that of NADPH-dependent 7-cyano-7-deazaguanine reductase from Sodalis glossinidius (strain morsitans).